The chain runs to 304 residues: ATP synthase gamma chain (304 aa).

It belongs to the ATPase gamma chain family. As to quaternary structure, F-type ATPases have 2 components, CF(1) - the catalytic core - and CF(0) - the membrane proton channel. CF(1) has five subunits: alpha(3), beta(3), gamma(1), delta(1), epsilon(1). CF(0) has three main subunits: a, b and c.

It localises to the cell membrane. Its function is as follows. Produces ATP from ADP in the presence of a proton gradient across the membrane. The gamma chain is believed to be important in regulating ATPase activity and the flow of protons through the CF(0) complex. The protein is ATP synthase gamma chain of Thermobifida fusca (strain YX).